We begin with the raw amino-acid sequence, 338 residues long: Glycerol-3-phosphate dehydrogenase [NAD(P)+] (338 aa).

4 residues coordinate NADPH: S14, Y15, H35, and K109. The sn-glycerol 3-phosphate site is built by K109, G138, and T140. A142 lines the NADPH pocket. Sn-glycerol 3-phosphate contacts are provided by K194, D247, S257, R258, and N259. The active-site Proton acceptor is the K194. Position 258 (R258) interacts with NADPH. Residues V282 and E284 each coordinate NADPH.

Belongs to the NAD-dependent glycerol-3-phosphate dehydrogenase family.

Its subcellular location is the cytoplasm. The enzyme catalyses sn-glycerol 3-phosphate + NAD(+) = dihydroxyacetone phosphate + NADH + H(+). The catalysed reaction is sn-glycerol 3-phosphate + NADP(+) = dihydroxyacetone phosphate + NADPH + H(+). It functions in the pathway membrane lipid metabolism; glycerophospholipid metabolism. Functionally, catalyzes the reduction of the glycolytic intermediate dihydroxyacetone phosphate (DHAP) to sn-glycerol 3-phosphate (G3P), the key precursor for phospholipid synthesis. This Shewanella baltica (strain OS195) protein is Glycerol-3-phosphate dehydrogenase [NAD(P)+].